Consider the following 703-residue polypeptide: MAGVPDNVKGVVELDPWLAPYGDILSARRFLADKWRHDIEHAVPGGRRSLVEFARDAYKSYGLHADAQSKSITYREWAPNATRAFLVGDFNGWDETSHELQNKDEFGVFTGVFGPGADGDFMIPHDSRVKVVFELADGSRIHRLPAWIKRATQPSKETAKEWGPSYEARFWNPASPYKFKHERPRLDPNVESLRIYEAHVGISTPEPRVGSYSEFTKDVLPRIRDLGYNAIQLMAIMEHAYYASFGYQVTNFFAVSSRYGTPEELKELIDTAHGMGIQVLLDVVHSHASKNVSDGLNMFDGTDYQYFHSISSGRGEHPLWDSRLFNYGSFEVQRFLLANLAFYIDVYQFDGFRFDGVTSMLYHHHGVGERGAFSGDYNEYLSDHSGVDHEALAYLMLANDLIHDMLPANGVTVAEDVSGYPTLCLPRSVGGCGFDYRLAMALPDMWIKLLKESKDEDWSMGHIVYTLVNRRYKEKVVAYAESHDQALVGDKTLAFWMMDAAMYTDMTVLKELTPVVDRGIALHKLIRLITHSLGGESYLNFEGNEFGHPEWLDFPNANNGDSYQYARRQFNLVDDGLLRYKHLYAFDKAMQEAEGKHKWLNTPQAYVSLKHETDKVISFERNGLVFIFNFHPTQSFTDYRIGVDEAGAYRIILNSDREEFGGHRRIEEENSVFHTTDLEWNGRRNFIQVYLPSRTALVLARNP.

(1,4-alpha-D-glucosyl)n is bound by residues W93 and K130. D355 acts as the Nucleophile in catalysis. The Proton donor role is filled by E415.

The protein belongs to the glycosyl hydrolase 13 family. GlgB subfamily.

The protein localises to the cytoplasm. The catalysed reaction is Transfers a segment of a (1-&gt;4)-alpha-D-glucan chain to a primary hydroxy group in a similar glucan chain.. It functions in the pathway glycan biosynthesis; glycogen biosynthesis. In terms of biological role, glycogen-branching enzyme participates in the glycogen biosynthetic process along with glycogenin and glycogen synthase. Generates alpha-1,6-glucosidic branches from alpha-1,4-linked glucose chains, to increase solubility of the glycogen polymer. The protein is 1,4-alpha-glucan-branching enzyme (GLC3) of Eremothecium gossypii (strain ATCC 10895 / CBS 109.51 / FGSC 9923 / NRRL Y-1056) (Yeast).